The following is a 443-amino-acid chain: Xaa-Pro dipeptidase (443 aa).

Aspartate 246, aspartate 257, histidine 339, glutamate 384, and glutamate 423 together coordinate Mn(2+).

This sequence belongs to the peptidase M24B family. Bacterial-type prolidase subfamily. It depends on Mn(2+) as a cofactor.

The catalysed reaction is Xaa-L-Pro dipeptide + H2O = an L-alpha-amino acid + L-proline. In terms of biological role, splits dipeptides with a prolyl residue in the C-terminal position. This chain is Xaa-Pro dipeptidase, found in Escherichia coli (strain 55989 / EAEC).